Reading from the N-terminus, the 659-residue chain is Endoglucanase A (659 aa).

A catalytic region spans residues 1 to 500 (MLIFETYLIL…SKLPNFPPKE (500 aa)). Catalysis depends on Asp101, which acts as the Nucleophile. Residues 413 to 433 (NSPKHPHHRTAHGSWSNQLTN) are disordered. Catalysis depends on residues His419, Asp457, and Glu466. The CBM3 domain maps to 501–658 (QVEDEFFVEA…GVLVFGTLPD (158 aa)).

Belongs to the glycosyl hydrolase 9 (cellulase E) family.

Its subcellular location is the secreted. The enzyme catalyses Endohydrolysis of (1-&gt;4)-beta-D-glucosidic linkages in cellulose, lichenin and cereal beta-D-glucans.. With respect to regulation, strongly inhibited by ZnCl(2) and by EDTA. In terms of biological role, active on carboxymethyl cellulose and carboxymethyl cellulose-RBB but not avicel, xanthan gum, carboxymethyl-curdulan-RBB or carboxymethyl-xylan-RBB. The protein is Endoglucanase A (eglA) of Bacillus pumilus (Bacillus mesentericus).